Reading from the N-terminus, the 529-residue chain is Cytochrome P450 monooxygenase 45 (529 aa).

A helical membrane pass occupies residues 24–44; the sequence is VLTICILALLTFVLREIVLYF. N-linked (GlcNAc...) asparagine glycans are attached at residues Asn-185 and Asn-322. Cys-454 contacts heme.

The protein belongs to the cytochrome P450 family. The cofactor is heme.

The protein localises to the membrane. The protein operates within secondary metabolite biosynthesis. Cytochrome P450 monooxygenase that is able to use trans-stilbene as a substrate for oxidation. This Postia placenta (strain ATCC 44394 / Madison 698-R) (Brown rot fungus) protein is Cytochrome P450 monooxygenase 45.